We begin with the raw amino-acid sequence, 95 residues long: Small ribosomal subunit protein bS20 (95 aa).

The protein belongs to the bacterial ribosomal protein bS20 family.

Functionally, binds directly to 16S ribosomal RNA. This is Small ribosomal subunit protein bS20 from Ehrlichia canis (strain Jake).